Reading from the N-terminus, the 228-residue chain is Eukaryotic translation initiation factor 4E-2 (228 aa).

A disulfide bond links Cys130 and Cys134.

This sequence belongs to the eukaryotic initiation factor 4E family. EIF4F is a multi-subunit complex, the composition of which varies with external and internal environmental conditions. It is composed of at least eIF4A, eIF4E and eIF4G. eIF4E is also known to interact with other partners. As to expression, highly expressed in all somatic tissues.

In terms of biological role, recognizes and binds the 7-methylguanosine-containing mRNA cap during an early step in the initiation of protein synthesis and facilitates ribosome binding by inducing the unwinding of the mRNAs secondary structures. All 5 eIF4E proteins bind monomethyl cap structures. Only ife-1, ife-2 and ife-5 bind trimethyl cap structures which result from trans-splicing. Translation of trimethyl cap structure mRNAs may be regulated by intracellular redox state; disulfide bonds change the width and depth of the cap-binding cavity determining selectivity to mRNA caps. Probably by regulating mRNA translation in somatic cells, negatively regulates lifespan independently of daf-2/insulin and let-363/TOR pathways. Negatively regulates resistance to oxidative stress. May play a role in embryonic development. This Caenorhabditis elegans protein is Eukaryotic translation initiation factor 4E-2 (ife-2).